Reading from the N-terminus, the 317-residue chain is Curved DNA-binding protein (317 aa).

The J domain occupies 5 to 69; it reads DYYKILGVEP…QKRAEFDEIR (65 aa).

It is found in the cytoplasm. The protein localises to the nucleoid. Its function is as follows. DNA-binding protein that preferentially recognizes a curved DNA sequence. It is probably a functional analog of DnaJ; displays overlapping activities with DnaJ, but functions under different conditions, probably acting as a molecular chaperone in an adaptive response to environmental stresses other than heat shock. Lacks autonomous chaperone activity; binds native substrates and targets them for recognition by DnaK. Its activity is inhibited by the binding of CbpM. The chain is Curved DNA-binding protein from Pseudomonas putida (strain W619).